The following is a 275-amino-acid chain: Beta-lactamase OXA-2 (275 aa).

An N-terminal signal peptide occupies residues 1–21 (MAIRIFAILFSIFSLATFAHA). Serine 72 (acyl-ester intermediate) is an active-site residue. Lysine 75 is subject to N6-carboxylysine. Residue 210–212 (KTG) participates in substrate binding.

It belongs to the class-D beta-lactamase family.

The enzyme catalyses a beta-lactam + H2O = a substituted beta-amino acid. Its function is as follows. This is an oxacillin-hydrolyzing beta-lactamase. The protein is Beta-lactamase OXA-2 (bla) of Escherichia coli.